The sequence spans 123 residues: Probable ketoamine kinase in tonB 3'region (123 aa).

Residue Asp-26 is the Proton acceptor of the active site.

The protein belongs to the fructosamine kinase family.

Ketoamine kinase that phosphorylates ketoamines on the third carbon of the sugar moiety to generate ketoamine 3-phosphate. This Klebsiella pneumoniae protein is Probable ketoamine kinase in tonB 3'region.